Reading from the N-terminus, the 176-residue chain is Ribosome rescue factor SmrB (176 aa).

The Smr domain occupies 97–172 (LDMHGMTQQE…GNGALLVLID (76 aa)).

Belongs to the SmrB family. Associates with collided ribosomes, but not with correctly translating polysomes.

Its function is as follows. Acts as a ribosome collision sensor. Detects stalled/collided disomes (pairs of ribosomes where the leading ribosome is stalled and a second ribosome has collided with it) and endonucleolytically cleaves mRNA at the 5' boundary of the stalled ribosome. Stalled/collided disomes form a new interface (primarily via the 30S subunits) that binds SmrB. Cleaved mRNA becomes available for tmRNA ligation, leading to ribosomal subunit dissociation and rescue of stalled ribosomes. This Photobacterium profundum (strain SS9) protein is Ribosome rescue factor SmrB.